The sequence spans 571 residues: Sulfite reductase [NADPH] hemoprotein beta-component (571 aa).

[4Fe-4S] cluster-binding residues include cysteine 435, cysteine 441, cysteine 480, and cysteine 484. Cysteine 484 is a siroheme binding site.

The protein belongs to the nitrite and sulfite reductase 4Fe-4S domain family. As to quaternary structure, alpha(8)-beta(8). The alpha component is a flavoprotein, the beta component is a hemoprotein. It depends on siroheme as a cofactor. [4Fe-4S] cluster serves as cofactor.

It carries out the reaction hydrogen sulfide + 3 NADP(+) + 3 H2O = sulfite + 3 NADPH + 4 H(+). Its pathway is sulfur metabolism; hydrogen sulfide biosynthesis; hydrogen sulfide from sulfite (NADPH route): step 1/1. Component of the sulfite reductase complex that catalyzes the 6-electron reduction of sulfite to sulfide. This is one of several activities required for the biosynthesis of L-cysteine from sulfate. The protein is Sulfite reductase [NADPH] hemoprotein beta-component of Serratia proteamaculans (strain 568).